The primary structure comprises 382 residues: ATP phosphoribosyltransferase regulatory subunit (382 aa).

This sequence belongs to the class-II aminoacyl-tRNA synthetase family. HisZ subfamily. As to quaternary structure, heteromultimer composed of HisG and HisZ subunits.

The protein localises to the cytoplasm. The protein operates within amino-acid biosynthesis; L-histidine biosynthesis; L-histidine from 5-phospho-alpha-D-ribose 1-diphosphate: step 1/9. Functionally, required for the first step of histidine biosynthesis. May allow the feedback regulation of ATP phosphoribosyltransferase activity by histidine. The protein is ATP phosphoribosyltransferase regulatory subunit of Acidovorax ebreus (strain TPSY) (Diaphorobacter sp. (strain TPSY)).